The following is a 248-amino-acid chain: DNA repair protein RecO (248 aa).

It belongs to the RecO family.

Involved in DNA repair and RecF pathway recombination. This Chelativorans sp. (strain BNC1) protein is DNA repair protein RecO.